A 222-amino-acid chain; its full sequence is Phosphoribosylformylglycinamidine synthase subunit PurQ (222 aa).

The Glutamine amidotransferase type-1 domain occupies 3-222 (AAVVVFPGSN…RALTGALAAV (220 aa)). The active-site Nucleophile is Cys-86. Residues His-194 and Glu-196 contribute to the active site.

As to quaternary structure, part of the FGAM synthase complex composed of 1 PurL, 1 PurQ and 2 PurS subunits.

It localises to the cytoplasm. The enzyme catalyses N(2)-formyl-N(1)-(5-phospho-beta-D-ribosyl)glycinamide + L-glutamine + ATP + H2O = 2-formamido-N(1)-(5-O-phospho-beta-D-ribosyl)acetamidine + L-glutamate + ADP + phosphate + H(+). It carries out the reaction L-glutamine + H2O = L-glutamate + NH4(+). It functions in the pathway purine metabolism; IMP biosynthesis via de novo pathway; 5-amino-1-(5-phospho-D-ribosyl)imidazole from N(2)-formyl-N(1)-(5-phospho-D-ribosyl)glycinamide: step 1/2. Part of the phosphoribosylformylglycinamidine synthase complex involved in the purines biosynthetic pathway. Catalyzes the ATP-dependent conversion of formylglycinamide ribonucleotide (FGAR) and glutamine to yield formylglycinamidine ribonucleotide (FGAM) and glutamate. The FGAM synthase complex is composed of three subunits. PurQ produces an ammonia molecule by converting glutamine to glutamate. PurL transfers the ammonia molecule to FGAR to form FGAM in an ATP-dependent manner. PurS interacts with PurQ and PurL and is thought to assist in the transfer of the ammonia molecule from PurQ to PurL. This is Phosphoribosylformylglycinamidine synthase subunit PurQ from Roseobacter denitrificans (strain ATCC 33942 / OCh 114) (Erythrobacter sp. (strain OCh 114)).